A 40-amino-acid chain; its full sequence is Photosystem II reaction center protein J (40 aa).

A helical membrane pass occupies residues 8 to 28; it reads IPLWLIGTIAGILVIGLVGIF.

This sequence belongs to the PsbJ family. PSII is composed of 1 copy each of membrane proteins PsbA, PsbB, PsbC, PsbD, PsbE, PsbF, PsbH, PsbI, PsbJ, PsbK, PsbL, PsbM, PsbT, PsbX, PsbY, PsbZ, Psb30/Ycf12, at least 3 peripheral proteins of the oxygen-evolving complex and a large number of cofactors. It forms dimeric complexes.

Its subcellular location is the plastid. The protein localises to the chloroplast thylakoid membrane. In terms of biological role, one of the components of the core complex of photosystem II (PSII). PSII is a light-driven water:plastoquinone oxidoreductase that uses light energy to abstract electrons from H(2)O, generating O(2) and a proton gradient subsequently used for ATP formation. It consists of a core antenna complex that captures photons, and an electron transfer chain that converts photonic excitation into a charge separation. This Anthoceros angustus (Hornwort) protein is Photosystem II reaction center protein J.